Reading from the N-terminus, the 778-residue chain is Endonuclease MutS2 (778 aa).

Residue 328-335 (GPNTGGKT) coordinates ATP. The Smr domain maps to 702–777 (LDLRGKRYEE…GSGATIVTFK (76 aa)).

This sequence belongs to the DNA mismatch repair MutS family. MutS2 subfamily. Homodimer. Binds to stalled ribosomes, contacting rRNA.

In terms of biological role, endonuclease that is involved in the suppression of homologous recombination and thus may have a key role in the control of bacterial genetic diversity. Functionally, acts as a ribosome collision sensor, splitting the ribosome into its 2 subunits. Detects stalled/collided 70S ribosomes which it binds and splits by an ATP-hydrolysis driven conformational change. Acts upstream of the ribosome quality control system (RQC), a ribosome-associated complex that mediates the extraction of incompletely synthesized nascent chains from stalled ribosomes and their subsequent degradation. Probably generates substrates for RQC. This Streptococcus pneumoniae (strain 70585) protein is Endonuclease MutS2.